A 435-amino-acid polypeptide reads, in one-letter code: Serine carboxypeptidase-like 14 (435 aa).

The signal sequence occupies residues 1–23 (MGSWIPKLLLLQLVLLLTKHADS). 3 cysteine pairs are disulfide-bonded: Cys-82–Cys-325, Cys-246–Cys-260, and Cys-284–Cys-291. The N-linked (GlcNAc...) asparagine glycan is linked to Asn-103. Ser-178 is a catalytic residue. Asn-344 is a glycosylation site (N-linked (GlcNAc...) asparagine). Asp-360 is a catalytic residue. An N-linked (GlcNAc...) asparagine glycan is attached at Asn-376. The active site involves His-413.

The protein belongs to the peptidase S10 family. As to expression, expressed in senescent leaves.

The protein resides in the secreted. Probable carboxypeptidase. This is Serine carboxypeptidase-like 14 (SCPL14) from Arabidopsis thaliana (Mouse-ear cress).